The following is a 714-amino-acid chain: Glutamine-dependent NAD(+) synthetase (714 aa).

Residues 5–275 (ITLATCNLNQ…VEVVTATVDL (271 aa)) enclose the CN hydrolase domain. Residue Glu-45 is the Proton acceptor; for glutaminase activity of the active site. Lys-114 (for glutaminase activity) is an active-site residue. Cys-175 serves as the catalytic Nucleophile; for glutaminase activity. The interval 329-714 (YHSPEEEIAL…GSTLDIMSID (386 aa)) is ligase. 359–366 (PLSGGIDS) is an ATP binding site. The active site involves Ser-361.

The protein in the C-terminal section; belongs to the NAD synthetase family.

It catalyses the reaction deamido-NAD(+) + L-glutamine + ATP + H2O = L-glutamate + AMP + diphosphate + NAD(+) + H(+). It functions in the pathway cofactor biosynthesis; NAD(+) biosynthesis; NAD(+) from deamido-NAD(+) (L-Gln route): step 1/1. This is Glutamine-dependent NAD(+) synthetase (QNS1) from Saccharomyces cerevisiae (strain ATCC 204508 / S288c) (Baker's yeast).